The following is a 321-amino-acid chain: Peroxidase 42 (321 aa).

The signal sequence occupies residues 1 to 29; that stretch reads MATSSGSCLIISLLVVVVAAALSASTASA. Gln30 is modified (pyrrolidone carboxylic acid). 4 cysteine pairs are disulfide-bonded: Cys40-Cys118, Cys73-Cys78, Cys124-Cys315, and Cys202-Cys227. His71 acts as the Proton acceptor in catalysis. Ca(2+) contacts are provided by Asp72, Ile75, Gly77, Asp79, and Ser81. N-linked (GlcNAc...) asparagine glycans are attached at residues Asn85 and Asn96. Pro165 provides a ligand contact to substrate. His195 serves as a coordination point for heme b. Thr196 lines the Ca(2+) pocket. Residue Asn211 is glycosylated (N-linked (GlcNAc...) asparagine). Residues Asp239, Thr242, and Gly247 each contribute to the Ca(2+) site. Asn270 is a glycosylation site (N-linked (GlcNAc...) asparagine).

The protein belongs to the peroxidase family. Classical plant (class III) peroxidase subfamily. Heme b serves as cofactor. The cofactor is Ca(2+).

Its subcellular location is the secreted. The enzyme catalyses 2 a phenolic donor + H2O2 = 2 a phenolic radical donor + 2 H2O. Its function is as follows. Removal of H(2)O(2), oxidation of toxic reductants, biosynthesis and degradation of lignin, suberization, auxin catabolism, response to environmental stresses such as wounding, pathogen attack and oxidative stress. These functions might be dependent on each isozyme/isoform in each plant tissue. This chain is Peroxidase 42 (PER42), found in Zea mays (Maize).